The following is a 760-amino-acid chain: Cellulose synthase-like protein G1 (760 aa).

A run of 2 helical transmembrane segments spans residues 28-48 (IYAI…VHSL) and 54-74 (TLIT…WATT). Residues aspartate 142 and aspartate 447 contribute to the active site. A run of 5 helical transmembrane segments spans residues 530–550 (IPLT…VSVF), 558–578 (FWLY…DFLL), 593–613 (LMIK…LKTL), 656–676 (VAIV…FCGG), and 680–700 (LELM…GAMV).

Belongs to the glycosyltransferase 2 family. Plant cellulose synthase-like G subfamily. As to expression, expressed in young seedlings, primarily in the vascular tissue.

The protein localises to the golgi apparatus membrane. Functionally, thought to be a Golgi-localized beta-glycan synthase that polymerize the backbones of noncellulosic polysaccharides (hemicelluloses) of plant cell wall. The protein is Cellulose synthase-like protein G1 (CSLG1) of Arabidopsis thaliana (Mouse-ear cress).